The following is a 71-amino-acid chain: Large ribosomal subunit protein bL31 (71 aa).

Zn(2+)-binding residues include cysteine 16, cysteine 18, cysteine 38, and cysteine 41.

This sequence belongs to the bacterial ribosomal protein bL31 family. Type A subfamily. In terms of assembly, part of the 50S ribosomal subunit. Zn(2+) is required as a cofactor.

Binds the 23S rRNA. In Francisella tularensis subsp. novicida (strain U112), this protein is Large ribosomal subunit protein bL31.